The primary structure comprises 502 residues: Glycerol kinase (502 aa).

Threonine 14 is an ADP binding site. ATP is bound by residues threonine 14, threonine 15, and serine 16. Threonine 14 contacts sn-glycerol 3-phosphate. Arginine 18 provides a ligand contact to ADP. Arginine 84, glutamate 85, and tyrosine 136 together coordinate sn-glycerol 3-phosphate. Glycerol-binding residues include arginine 84, glutamate 85, and tyrosine 136. At histidine 232 the chain carries Phosphohistidine; by HPr. Residue aspartate 246 coordinates sn-glycerol 3-phosphate. Residues aspartate 246 and glutamine 247 each contribute to the glycerol site. 2 residues coordinate ADP: threonine 268 and glycine 311. Residues threonine 268, glycine 311, glutamine 315, and glycine 412 each contribute to the ATP site. ADP is bound by residues glycine 412 and asparagine 416.

Belongs to the FGGY kinase family. In terms of assembly, homotetramer and homodimer (in equilibrium). Post-translationally, the phosphoenolpyruvate-dependent sugar phosphotransferase system (PTS), including enzyme I, and histidine-containing protein (HPr) are required for the phosphorylation, which leads to the activation of the enzyme.

The enzyme catalyses glycerol + ATP = sn-glycerol 3-phosphate + ADP + H(+). It functions in the pathway polyol metabolism; glycerol degradation via glycerol kinase pathway; sn-glycerol 3-phosphate from glycerol: step 1/1. Its activity is regulated as follows. Activated by phosphorylation and inhibited by fructose 1,6-bisphosphate (FBP). Its function is as follows. Key enzyme in the regulation of glycerol uptake and metabolism. Catalyzes the phosphorylation of glycerol to yield sn-glycerol 3-phosphate. The protein is Glycerol kinase of Streptococcus pneumoniae serotype 19F (strain G54).